A 112-amino-acid chain; its full sequence is MAYRKLGRNTGHRGSMLRNLATSLLKHERIQTTEARAKEVNAIAEKMITLGKQGDLAARRNALTYLLEEDVVTKLFTEIAPKYADRQGGYTRVIKVGPRRGDAAEMVLIELV.

It belongs to the bacterial ribosomal protein bL17 family. Part of the 50S ribosomal subunit. Contacts protein L32.

The protein is Large ribosomal subunit protein bL17 of Desulfitobacterium hafniense (strain DSM 10664 / DCB-2).